The following is an 85-amino-acid chain: Cell division topological specificity factor (85 aa).

This sequence belongs to the MinE family.

Its function is as follows. Prevents the cell division inhibition by proteins MinC and MinD at internal division sites while permitting inhibition at polar sites. This ensures cell division at the proper site by restricting the formation of a division septum at the midpoint of the long axis of the cell. In Deinococcus geothermalis (strain DSM 11300 / CIP 105573 / AG-3a), this protein is Cell division topological specificity factor.